The sequence spans 315 residues: Lipase 3 (315 aa).

The signal sequence occupies residues methionine 1 to glycine 18. A lipid anchor (N-palmitoyl cysteine) is attached at cysteine 19. Cysteine 19 is lipidated: S-diacylglycerol cysteine. Residues proline 69–valine 296 form the AB hydrolase-1 domain. The active site involves histidine 74. The active-site Charge relay system is the serine 142.

It belongs to the lipase/esterase LIP3/BchO family.

It localises to the cell membrane. It carries out the reaction a triacylglycerol + H2O = a diacylglycerol + a fatty acid + H(+). In Moraxella sp. (strain TA144), this protein is Lipase 3 (lip3).